A 216-amino-acid polypeptide reads, in one-letter code: Orotidine 5'-phosphate decarboxylase (216 aa).

Residues D12, K34, 62–71 (DFKVADIDAT), S119, 172–182 (PGVGFQGGNAK), G194, and R195 each bind substrate. K64 acts as the Proton donor in catalysis.

Belongs to the OMP decarboxylase family. Type 1 subfamily. As to quaternary structure, homodimer.

The enzyme catalyses orotidine 5'-phosphate + H(+) = UMP + CO2. It participates in pyrimidine metabolism; UMP biosynthesis via de novo pathway; UMP from orotate: step 2/2. Its function is as follows. Catalyzes the decarboxylation of orotidine 5'-monophosphate (OMP) to uridine 5'-monophosphate (UMP). The chain is Orotidine 5'-phosphate decarboxylase from Methanosphaera stadtmanae (strain ATCC 43021 / DSM 3091 / JCM 11832 / MCB-3).